The chain runs to 198 residues: Recombination protein RecR (198 aa).

The C4-type zinc finger occupies 56-71 (CHVCGNVDTGDPCGIC). One can recognise a Toprim domain in the interval 79–174 (RMLCVVEEVA…RLTQLAHGLP (96 aa)).

Belongs to the RecR family.

Functionally, may play a role in DNA repair. It seems to be involved in an RecBC-independent recombinational process of DNA repair. It may act with RecF and RecO. The protein is Recombination protein RecR of Rhizorhabdus wittichii (strain DSM 6014 / CCUG 31198 / JCM 15750 / NBRC 105917 / EY 4224 / RW1) (Sphingomonas wittichii).